A 173-amino-acid polypeptide reads, in one-letter code: Alpha-crystallin A chain (173 aa).

N-acetylmethionine is present on methionine 1. The tract at residues methionine 1 to glutamate 63 is required for complex formation with BFSP1 and BFSP2. Glutamine 6 carries the deamidated glutamine; partial modification. Phosphoserine is present on serine 45. At glutamine 50 the chain carries Deamidated glutamine; partial. Positions leucine 52–glutamate 164 constitute a sHSP domain. Residues lysine 70 and lysine 99 each carry the N6-acetyllysine modification. Residues histidine 100, glutamate 102, and histidine 107 each contribute to the Zn(2+) site. Serine 122 bears the Phosphoserine mark. Asparagine 123 carries the deamidated asparagine; partial modification. Positions isoleucine 146–proline 167 are enriched in basic and acidic residues. The segment at isoleucine 146 to serine 173 is disordered. Histidine 154 is a binding site for Zn(2+). Serine 162 carries an O-linked (GlcNAc) serine glycan.

This sequence belongs to the small heat shock protein (HSP20) family. In terms of assembly, heteromer composed of three CRYAA and one CRYAB subunits. Inter-subunit bridging via zinc ions enhances stability, which is crucial as there is no protein turn over in the lens. Can also form homodimers and homotetramers (dimers of dimers) which serve as the building blocks of homooligomers. Within homooligomers, the zinc-binding motif is created from residues of 3 different molecules. His-100 and Glu-102 from one molecule are ligands of the zinc ion, and His-107 and His-154 residues from additional molecules complete the site with tetrahedral coordination geometry. Part of a complex required for lens intermediate filament formation composed of BFSP1, BFSP2 and CRYAA. Post-translationally, acetylation at Lys-70 may increase chaperone activity. Undergoes age-dependent proteolytical cleavage at the C-terminus.

It localises to the cytoplasm. It is found in the nucleus. Contributes to the transparency and refractive index of the lens. Acts as a chaperone, preventing aggregation of various proteins under a wide range of stress conditions. Required for the correct formation of lens intermediate filaments as part of a complex composed of BFSP1, BFSP2 and CRYAA. This chain is Alpha-crystallin A chain (CRYAA), found in Osphranter rufus (Red kangaroo).